We begin with the raw amino-acid sequence, 263 residues long: Reductase pytE (263 aa).

Belongs to the avfA family.

Its pathway is secondary metabolite biosynthesis. Functionally, reductase; part of the gene cluster that mediates the biosynthesis of pyranterreones, a family of antioxidative compounds. The first step of pyranonigrins biosynthesis is performed by the hybrid PKS-NRPS synthetase pytA that condenses 4 malonyl-CoA units ato the acetyl starter unit by the modular PKS of pytA. The acyl chain is then connected to an L-serine through the amide bond by the modular NRPS of pytA. A tetramic acid is formed and released from the PKS-NRPS pytA to give pyranterreone 5 with the help of the thioesterase pytI. Pyranterreone 5 could be methylated by pytC to afford pyranterreone 6. Both pyranterreones 5 and 6 are subsequently oxidized by the FAD-linked oxidoreductase pytB and the cytochrome P450 monooxygenase pytD to form the fused gamma-pyrone core, resulting in pyranterreones 7 and 11, respectively. The hydroxy group at C-8 of pyranterreones 7 and 11 are dehydrated by the aspartyl protease pytH to form a delta-7 double bond to give pyranterreones 3 and 1, 2 accordingly. The exo-methylene of pyranterreone 3 could be reduced into a pendant methyl by reductase pytE to provide pyranterreone 4, also known as cordylactam. Pyranterreone 4 can be reconverted to pyranterreone 3 through pytB-catalyzed dehydrogenation or further oxidized to pyranterreones 9 and 10. The chain is Reductase pytE from Aspergillus terreus.